The chain runs to 605 residues: Alpha-1,3-galactosidase A (605 aa).

A signal peptide spans 1-20 (MKKYLHILPACFLFYAAAHA). 6 PbH1 repeats span residues 256-278 (SKNITLSRLQMHYMHGLGIVSQY), 312-334 (KGKVIIDSCYFAGAQDDPVNVHG), 421-443 (TPEVEIRNCYFTRTSTRGTLVTT), 444-466 (PRKVVIENNTYYKTGMSAILIEA), 477-507 (VKDVLIKGNTFIDCAYNGGPGHAVIAIHPSN), and 517-547 (HQNIRIEDNTFRTFDYPVLYAKSTAGLLFRN).

This sequence belongs to the glycosyl hydrolase 110 family. A subfamily.

It catalyses the reaction Hydrolysis of terminal, non-reducing branched (1-&gt;3)-alpha-D-galactosidic residues, producing free D-galactose.. The catalysed reaction is Hydrolysis of terminal, non-reducing alpha-D-galactose residues in alpha-D-galactosides, including galactose oligosaccharides, galactomannans and galactolipids.. Its function is as follows. Alpha-galactosidase that specifically removes branched alpha-1,3-linked galactose residues present in blood group B antigens. Has no activity toward linear alpha-1,3-linked galactose residues. This is Alpha-1,3-galactosidase A (glaA) from Bacteroides fragilis (strain ATCC 25285 / DSM 2151 / CCUG 4856 / JCM 11019 / LMG 10263 / NCTC 9343 / Onslow / VPI 2553 / EN-2).